Reading from the N-terminus, the 76-residue chain is Acyl carrier protein (76 aa).

The Carrier domain occupies 1–76 (MSIEERVKKI…SAIDYVQNNQ (76 aa)). Ser-36 carries the O-(pantetheine 4'-phosphoryl)serine modification.

This sequence belongs to the acyl carrier protein (ACP) family. In terms of processing, 4'-phosphopantetheine is transferred from CoA to a specific serine of apo-ACP by AcpS. This modification is essential for activity because fatty acids are bound in thioester linkage to the sulfhydryl of the prosthetic group.

Its subcellular location is the cytoplasm. It participates in lipid metabolism; fatty acid biosynthesis. In terms of biological role, carrier of the growing fatty acid chain in fatty acid biosynthesis. The sequence is that of Acyl carrier protein from Pasteurella multocida (strain Pm70).